The primary structure comprises 331 residues: Pantothenate kinase (331 aa).

109–116 is a binding site for ATP; the sequence is GSVAVGKS.

It belongs to the prokaryotic pantothenate kinase family.

The protein localises to the cytoplasm. It carries out the reaction (R)-pantothenate + ATP = (R)-4'-phosphopantothenate + ADP + H(+). Its pathway is cofactor biosynthesis; coenzyme A biosynthesis; CoA from (R)-pantothenate: step 1/5. This is Pantothenate kinase from Sinorhizobium fredii (strain NBRC 101917 / NGR234).